A 57-amino-acid polypeptide reads, in one-letter code: Probable antitoxin MazE1 (57 aa).

As to quaternary structure, forms a complex with cognate toxin MazF1.

In terms of biological role, antitoxin component of a type II toxin-antitoxin (TA) system. The sequence is that of Probable antitoxin MazE1 (mazE1) from Mycobacterium tuberculosis (strain ATCC 25618 / H37Rv).